Here is a 328-residue protein sequence, read N- to C-terminus: UPF0421 protein SSP0904 (328 aa).

A run of 4 helical transmembrane segments spans residues 26 to 46 (LFCL…IVTI), 61 to 81 (LPAT…FGDQ), 84 to 104 (FAYA…NLHV), and 132 to 152 (LLTA…ILPP).

The protein belongs to the UPF0421 family.

The protein localises to the cell membrane. This chain is UPF0421 protein SSP0904, found in Staphylococcus saprophyticus subsp. saprophyticus (strain ATCC 15305 / DSM 20229 / NCIMB 8711 / NCTC 7292 / S-41).